A 433-amino-acid chain; its full sequence is Glucoside xylosyltransferase 1 (433 aa).

The Cytoplasmic segment spans residues 1–6 (MRRFAR). Residues 7-29 (VALLFLGCGVCSLLYGVSQLALS) form a helical; Signal-anchor for type II membrane protein membrane-spanning segment. At 30–433 (LEQEAGGARQ…DLSVRRSKGS (404 aa)) the chain is on the lumenal side. The tract at residues 39–64 (QRQARESAAPGGGRQAGSADGGEEGA) is disordered. Asn69, Asn166, Asn271, Asn305, and Asn380 each carry an N-linked (GlcNAc...) asparagine glycan.

This sequence belongs to the glycosyltransferase 8 family.

The protein localises to the membrane. The enzyme catalyses 3-O-(beta-D-glucosyl)-L-seryl-[EGF-like domain protein] + UDP-alpha-D-xylose = 3-O-[alpha-D-xylosyl-(1-&gt;3)-beta-D-glucosyl]-L-seryl-[EGF-like domain protein] + UDP + H(+). Functionally, glycosyltransferase which elongates the O-linked glucose attached to EGF-like repeats in the extracellular domain of Notch proteins by catalyzing the addition of xylose. The polypeptide is Glucoside xylosyltransferase 1 (GXYLT1) (Gallus gallus (Chicken)).